A 157-amino-acid chain; its full sequence is 2-C-methyl-D-erythritol 2,4-cyclodiphosphate synthase (157 aa).

Positions 8 and 10 each coordinate a divalent metal cation. Residues 8–10 and 34–35 contribute to the 4-CDP-2-C-methyl-D-erythritol 2-phosphate site; these read DVH and HS. A divalent metal cation is bound at residue histidine 42. 4-CDP-2-C-methyl-D-erythritol 2-phosphate contacts are provided by residues 56 to 58, 61 to 65, 100 to 106, 132 to 135, phenylalanine 139, and arginine 142; these read DIG, FPDTD, AQAPKMA, and TTTE.

It belongs to the IspF family. As to quaternary structure, homotrimer. A divalent metal cation serves as cofactor.

It catalyses the reaction 4-CDP-2-C-methyl-D-erythritol 2-phosphate = 2-C-methyl-D-erythritol 2,4-cyclic diphosphate + CMP. The protein operates within isoprenoid biosynthesis; isopentenyl diphosphate biosynthesis via DXP pathway; isopentenyl diphosphate from 1-deoxy-D-xylulose 5-phosphate: step 4/6. Involved in the biosynthesis of isopentenyl diphosphate (IPP) and dimethylallyl diphosphate (DMAPP), two major building blocks of isoprenoid compounds. Catalyzes the conversion of 4-diphosphocytidyl-2-C-methyl-D-erythritol 2-phosphate (CDP-ME2P) to 2-C-methyl-D-erythritol 2,4-cyclodiphosphate (ME-CPP) with a corresponding release of cytidine 5-monophosphate (CMP). This is 2-C-methyl-D-erythritol 2,4-cyclodiphosphate synthase from Pseudomonas aeruginosa (strain UCBPP-PA14).